The sequence spans 592 residues: Probable tubulin polyglutamylase TTLL2 (592 aa).

Disordered regions lie at residues 1–23 (MRGR…TTTP) and 51–77 (GVSI…MAED). A compositionally biased stretch (polar residues) spans 7–23 (CSSTQSQALGSLRTTTP). Residues 84-427 (LKPLVFRVDE…NGLRNEGREA (344 aa)) enclose the TTL domain. ATP contacts are provided by residues K212, 218–219 (RG), 240–243 (QKYI), and 253–255 (KCD). R218 contacts a protein. R279 is a binding site for L-glutamate. 298-299 (TN) is a binding site for ATP. Positions 301 and 321 each coordinate L-glutamate. Positions 373, 386, and 388 each coordinate Mg(2+). An L-glutamate-binding site is contributed by K404.

It belongs to the tubulin--tyrosine ligase family. Requires Mg(2+) as cofactor. Testis.

Probable tubulin polyglutamylase that generates side chains of glutamate on the gamma-carboxyl group of specific glutamate residues within the C-terminal tail of target proteins. Similar to TTLL1, may acquire enzymatic activity only in complex with other proteins as it is most likely lacking domains important for autonomous activity. Probably involved in the side-chain initiation step of the polyglutamylation reaction rather than the elongation step. The sequence is that of Probable tubulin polyglutamylase TTLL2 from Homo sapiens (Human).